A 750-amino-acid chain; its full sequence is Methylmalonyl-CoA mutase, mitochondrial (750 aa).

Residues 1 to 32 (MLRVKNQLFLLSPHYLKQVKESSGSRLIRQRF) constitute a mitochondrion transit peptide. Gln50 serves as a coordination point for malonyl-CoA. Lys89 bears the N6-acetyllysine mark. Malonyl-CoA contacts are provided by residues 96 to 99 (YPTM) and 106 to 110 (TIRQY). Position 212 is an N6-acetyllysine (Lys212). Malonyl-CoA-binding positions include 216–218 (TIQ), Arg228, Lys255, His265, and 304–306 (RLS). Lys335 carries the N6-acetyllysine modification. At Lys343 the chain carries N6-succinyllysine. Ser481 carries the phosphoserine modification. Lys595 is subject to N6-succinyllysine. Lys602 carries the N6-acetyllysine modification. In terms of domain architecture, B12-binding spans 614–746 (RPRLLVAKMG…DDIEKCLEKK (133 aa)). His627 is a binding site for adenosylcob(III)alamin.

This sequence belongs to the methylmalonyl-CoA mutase family. As to quaternary structure, homodimer. Interacts (the apoenzyme form) with MMAA; the interaction is GTP dependent. The cofactor is adenosylcob(III)alamin.

The protein resides in the mitochondrion matrix. It localises to the mitochondrion. It is found in the cytoplasm. It catalyses the reaction (R)-methylmalonyl-CoA = succinyl-CoA. Its activity is regulated as follows. Inhibited by itaconyl-CoA, a metabolite that inactivates the coenzyme B12 cofactor. In terms of biological role, catalyzes the reversible isomerization of methylmalonyl-CoA (MMCoA) (generated from branched-chain amino acid metabolism and degradation of dietary odd chain fatty acids and cholesterol) to succinyl-CoA (3-carboxypropionyl-CoA), a key intermediate of the tricarboxylic acid cycle. In Macaca fascicularis (Crab-eating macaque), this protein is Methylmalonyl-CoA mutase, mitochondrial (MMUT).